A 798-amino-acid chain; its full sequence is Bromodomain-containing protein 2 (798 aa).

M1 is subject to N-acetylmethionine. The disordered stretch occupies residues 1–21 (MLQNVTPHKLPGEGNAGLLGL). At T6 the chain carries Phosphothreonine. Residue S36 is modified to Phosphoserine. Residues 53–72 (LQLAPANPPPPEVSNPKKPG) are disordered. The Bromo 1 domain occupies 73-179 (RVTNQLQYLH…KIFLQKVASM (107 aa)). A protein contacts are provided by D111, Y154, N155, K156, D159, and D160. Disordered stretches follow at residues 267 to 348 (PPAQ…LSEQ), 454 to 645 (DEPL…YDEK), and 736 to 798 (KRLQ…SDSG). Over residues 284–297 (TTTPTPTAILAPGS) the composition is skewed to low complexity. Phosphoserine is present on residues S297, S300, and S304. The segment covering 315–331 (MRRESGRPIKPPRKDLP) has biased composition (basic and acidic residues). The Bromo 2 domain maps to 343-452 (GKLSEQLKHC…DVFEFRYAKM (110 aa)). Acidic residues predominate over residues 480 to 512 (SSEESSSESSSEEEEEEEEDEDEEESESSDSEE). Residues 542 to 564 (KPKRKREKKEKKKKRKAEKHRGR) show a composition bias toward basic residues. Residues 553 to 557 (KKKRK) carry the Nuclear localization signal motif. One can recognise an NET domain in the interval 630-712 (DSEEEEESRP…SCLRKKPRKP (83 aa)). Position 631 is a phosphoserine (S631). Residues 772–792 (SASSSSSDSSSSSSSSSSSDT) show a composition bias toward low complexity.

The protein belongs to the BET family. As to quaternary structure, homodimer. Interacts with E2F1. Interacts with (acetylated) STAT3; promoting STAT3 recruitment to chromatin. Interacts with CTCF; promoting BRD2 recruitment to chromatin. Predominantly expressed in the testis, followed by ovary, placenta, embryo and to a lower extent in somatic tissues.

The protein resides in the nucleus. The protein localises to the chromosome. Its function is as follows. Chromatin reader protein that specifically recognizes and binds histone H4 acetylated at 'Lys-5' and 'Lys-12' (H4K5ac and H4K12ac, respectively), thereby controlling gene expression and remodeling chromatin structures. Recruits transcription factors and coactivators to target gene sites, and activates RNA polymerase II machinery for transcriptional elongation. Plays a key role in genome compartmentalization via its association with CTCF and cohesin: recruited to chromatin by CTCF and promotes formation of topologically associating domains (TADs) via its ability to bind acetylated histones, contributing to CTCF boundary formation and enhancer insulation. Also recognizes and binds acetylated non-histone proteins, such as STAT3. Involved in inflammatory response by regulating differentiation of naive CD4(+) T-cells into T-helper Th17: recognizes and binds STAT3 acetylated at 'Lys-87', promoting STAT3 recruitment to chromatin. In addition to acetylated lysines, also recognizes and binds lysine residues on histones that are both methylated and acetylated on the same side chain to form N6-acetyl-N6-methyllysine (Kacme), an epigenetic mark of active chromatin associated with increased transcriptional initiation. Specifically binds histone H4 acetyl-methylated at 'Lys-5' and 'Lys-12' (H4K5acme and H4K12acme, respectively). The sequence is that of Bromodomain-containing protein 2 from Mus musculus (Mouse).